A 188-amino-acid chain; its full sequence is Tuftelin (188 aa).

Positions 1-181 (SLRKTVQDLL…DRMEHLIEKQ (181 aa)) form a coiled coil.

Belongs to the tuftelin family. As to quaternary structure, interacts with TFIP11.

It is found in the secreted. Involved in the structural organization of the epidermis. Involved in the mineralization and structural organization of enamel. The chain is Tuftelin (TUFT1) from Sus scrofa (Pig).